A 166-amino-acid chain; its full sequence is Nicotine metabolites export pump subunit NepB (166 aa).

4 helical membrane passes run 51-71 (LHAWLYLGSAITTEVTGTVIL), 77-97 (FQLPAQTTAAMALYAFSFFLL), 108-128 (VAYATWSGLGTVAVAFAGAII), and 133-153 (VTLGRITAITAVIGGIVILNL).

Belongs to the drug/metabolite transporter (DMT) superfamily. Small multidrug resistance (SMR) (TC 2.A.7.1) family. NepA/NepB subfamily. As to quaternary structure, the efflux pump is composed of NepA and NepB.

It localises to the cell membrane. Functionally, component of an efflux pump responsible for the transport of nicotine breakdown products, in particular methylamine, out of the cell. This pump apparently serves as a metabolic valve for nicotine catabolites and may protect the bacteria from the potentially toxic side effects of these compounds. This is Nicotine metabolites export pump subunit NepB (nepB) from Paenarthrobacter nicotinovorans (Arthrobacter nicotinovorans).